The chain runs to 279 residues: MLDISNTTWDLSNQSVLQPLWDYLQQNHESSLRSPLFPVILSVSMYLVLVFFYTVLDLLAPTWPSIRRYQIHQDRTVTWSNIGSTLALTTYNHLLYIFPAAVAQWLWRPPIPLPREAPTLTAFLLGIVGCTVVFDFQYYLWHLLHHRVGWLYRTFHALHHQYRQTFSLVTQYLSAWELFSVGFWTTVDPLLLQCHCLTAWAFMLFNIWVSTEDHCGYDFPWAMHRLVPFGLWGGALRHDAHHQLPGTNFAPFFAHWDWLGGTATMPAPVKTKKRDDKEA.

N-linked (GlcNAc...) asparagine glycosylation is found at Asn-6 and Asn-13. 3 membrane-spanning segments follow: residues 36–56, 86–106, and 120–140; these read LFPV…YTVL, LALT…AQWL, and LTAF…QYYL. One can recognise a Fatty acid hydroxylase domain in the interval 128–262; sequence VGCTVVFDFQ…FAHWDWLGGT (135 aa). The Histidine box-1 motif lies at 141-145; it reads WHLLH. The Histidine box-2 motif lies at 156–160; that stretch reads HALHH. A run of 2 transmembrane segments spans residues 165 to 185 and 189 to 209; these read TFSL…GFWT and PLLL…NIWV. The Histidine box-3 motif lies at 237–243; sequence RHDAHHQ.

It belongs to the sterol desaturase family. Fe cation is required as a cofactor.

The protein localises to the endoplasmic reticulum membrane. Its function is as follows. May catalyze the formation of 25-hydroxycholesterol from cholesterol. This Danio rerio (Zebrafish) protein is Cholesterol 25-hydroxylase-like protein 2.